Here is a 736-residue protein sequence, read N- to C-terminus: Phosphoribosylformylglycinamidine synthase subunit PurL (736 aa).

Residue H50 is part of the active site. Residues Y53 and K92 each contribute to the ATP site. Residue E94 coordinates Mg(2+). Residues 95-98 (SHNH) and R117 each bind substrate. The Proton acceptor role is filled by H96. Mg(2+) is bound at residue D118. Q241 is a substrate binding site. Residue D269 participates in Mg(2+) binding. Residue 313–315 (ESQ) participates in substrate binding. ATP is bound by residues D495 and G532. N533 is a Mg(2+) binding site. S535 is a substrate binding site.

This sequence belongs to the FGAMS family. In terms of assembly, monomer. Part of the FGAM synthase complex composed of 1 PurL, 1 PurQ and 2 PurS subunits.

Its subcellular location is the cytoplasm. The catalysed reaction is N(2)-formyl-N(1)-(5-phospho-beta-D-ribosyl)glycinamide + L-glutamine + ATP + H2O = 2-formamido-N(1)-(5-O-phospho-beta-D-ribosyl)acetamidine + L-glutamate + ADP + phosphate + H(+). The protein operates within purine metabolism; IMP biosynthesis via de novo pathway; 5-amino-1-(5-phospho-D-ribosyl)imidazole from N(2)-formyl-N(1)-(5-phospho-D-ribosyl)glycinamide: step 1/2. In terms of biological role, part of the phosphoribosylformylglycinamidine synthase complex involved in the purines biosynthetic pathway. Catalyzes the ATP-dependent conversion of formylglycinamide ribonucleotide (FGAR) and glutamine to yield formylglycinamidine ribonucleotide (FGAM) and glutamate. The FGAM synthase complex is composed of three subunits. PurQ produces an ammonia molecule by converting glutamine to glutamate. PurL transfers the ammonia molecule to FGAR to form FGAM in an ATP-dependent manner. PurS interacts with PurQ and PurL and is thought to assist in the transfer of the ammonia molecule from PurQ to PurL. This Bartonella tribocorum (strain CIP 105476 / IBS 506) protein is Phosphoribosylformylglycinamidine synthase subunit PurL.